We begin with the raw amino-acid sequence, 158 residues long: MTRPDSGSSPAPLSEARRRKRNPLPTVLGITALLGLAGFIAFGNLNKSLEYFVTPTEYQQQAAQLKGRPVRIGGLVKAVKYNPQSLELSFTVTDGGASFPVRYRGAVSDLFKENQGVVVRGEFEGQTFQARELIVKHSEQYDVPKTQAELRDLLEQSE.

Over residues 1–11 the composition is skewed to polar residues; that stretch reads MTRPDSGSSPA. The disordered stretch occupies residues 1–20; the sequence is MTRPDSGSSPAPLSEARRRK. The Cytoplasmic segment spans residues 1-23; it reads MTRPDSGSSPAPLSEARRRKRNP. The helical; Signal-anchor for type II membrane protein transmembrane segment at 24–44 threads the bilayer; the sequence is LPTVLGITALLGLAGFIAFGN. The Extracellular portion of the chain corresponds to 45–158; sequence LNKSLEYFVT…ELRDLLEQSE (114 aa). Positions 137 and 141 each coordinate heme.

Belongs to the CcmE/CycJ family.

It is found in the cell membrane. Functionally, heme chaperone required for the biogenesis of c-type cytochromes. Transiently binds heme delivered by CcmC and transfers the heme to apo-cytochromes in a process facilitated by CcmF and CcmH. This is Cytochrome c-type biogenesis protein CcmE from Deinococcus deserti (strain DSM 17065 / CIP 109153 / LMG 22923 / VCD115).